We begin with the raw amino-acid sequence, 152 residues long: Large ribosomal subunit protein uL15 (152 aa).

Residues 1 to 57 form a disordered region; the sequence is MTSTLNTLKSNSGSRKKKLRKGRGIAAGQGASCGFGMRGQKSRSGRPTRPGFEGGQM. Residues 14-23 are compositionally biased toward basic residues; that stretch reads SRKKKLRKGR. The span at 25–37 shows a compositional bias: gly residues; it reads IAAGQGASCGFGM.

It belongs to the universal ribosomal protein uL15 family. In terms of assembly, part of the 50S ribosomal subunit.

Functionally, binds to the 23S rRNA. This Prochlorococcus marinus (strain MIT 9301) protein is Large ribosomal subunit protein uL15.